A 1269-amino-acid polypeptide reads, in one-letter code: DNA-directed RNA polymerase subunit beta (1269 aa).

It belongs to the RNA polymerase beta chain family. As to quaternary structure, the RNAP catalytic core consists of 2 alpha, 1 beta, 1 beta' and 1 omega subunit. When a sigma factor is associated with the core the holoenzyme is formed, which can initiate transcription.

The catalysed reaction is RNA(n) + a ribonucleoside 5'-triphosphate = RNA(n+1) + diphosphate. In terms of biological role, DNA-dependent RNA polymerase catalyzes the transcription of DNA into RNA using the four ribonucleoside triphosphates as substrates. The chain is DNA-directed RNA polymerase subunit beta from Porphyromonas gingivalis (strain ATCC 33277 / DSM 20709 / CIP 103683 / JCM 12257 / NCTC 11834 / 2561).